Consider the following 462-residue polypeptide: Hydroxymethylglutaryl-CoA synthase (462 aa).

Glu-86 acts as the Proton donor/acceptor in catalysis. Cys-120 acts as the Acyl-thioester intermediate in catalysis. (3S)-3-hydroxy-3-methylglutaryl-CoA is bound by residues Cys-120, Thr-211, His-261, Lys-270, Asn-338, and Ser-372. Catalysis depends on His-261, which acts as the Proton donor/acceptor.

The protein belongs to the thiolase-like superfamily. HMG-CoA synthase family.

It carries out the reaction acetoacetyl-CoA + acetyl-CoA + H2O = (3S)-3-hydroxy-3-methylglutaryl-CoA + CoA + H(+). Its pathway is siderophore biosynthesis. Functionally, hydroxymethylglutaryl-CoA synthase involved in the biosynthesis of siderophore ferrichrome A which is contributing to organismal virulence. The first step of ferrichrome A biosynthesis is performed by the HMG-CoA synthase hcs1 which catalyzes the generation of HMG-CoA and CoA using acetoacetyl-CoA and acetyl-CoA as substrates. The enoyl-CoA isomerase/hydratase fer4 then catalyzes the conversion of hcs1-produced HMG-CoA to methylglutaconyl-CoA. The acyltransferase fer5 then fuses the fer4-generated methylglutaconyl-CoA with sid1-generated hydroxyornithine to yield methylglutaconyl hydroxyornithine. Methylglutaconyl hydroxyornithine is then available for use by the NRPS fer3 to generate ferrichrome A. The chain is Hydroxymethylglutaryl-CoA synthase from Mycosarcoma maydis (Corn smut fungus).